The chain runs to 173 residues: Co-chaperone protein HscB homolog (173 aa).

The region spanning 5-77 (CHFALFELQP…PKRARYLLAM (73 aa)) is the J domain.

The protein belongs to the HscB family. As to quaternary structure, interacts with HscA and stimulates its ATPase activity.

Co-chaperone involved in the maturation of iron-sulfur cluster-containing proteins. Seems to help targeting proteins to be folded toward HscA. This Pseudomonas fluorescens (strain SBW25) protein is Co-chaperone protein HscB homolog.